Consider the following 646-residue polypeptide: MASGGAFCLIANDGKADKIILAQDLLNSRISNIKNVNKSYGKPDPEPTLSQIEETHMVHFNAHFKPYVPIGFEYNKVRPHTGTPTLGNKLTFGIPQYGDFFHDMVGHHVLGACHSSWQDAPIQGSSQMGAHGQLQTFPRNGYDWDNQTPLEGAVYTLVDPFGRPIVPGTKNAYRNLVYYCEYPGERLYENVRFDVNGNSLDEYSSDVTTLVRKFCIPGDKMTGYKHLVGQEVSVEGTSGPLLCNIHDLHKPHQSKPILTDENDTQRTCTHTNPKFLSQHFPENSHNIQTAGKQDITPITDTTYLDIRRNVQYSCNGPQTPKYYQPPLALWIKLRFWFNENVNLAIPSVSIPFGERFITIKLASQKDLVNEFPGLFVRQSRFIPGRPSRRNIRFKPWFIPGVINEISLTNNELYINNLFVTPEIHNLFVKRVRFSLIRVHKTQVTHTNNNHHDEKLMSALKWPIEYMFIGLKPTWNISDQNPHQHRDWHKFGHVVNAIMQPTHHAEISFQDRDTALPDACSSISDINPVTYPITLPIIKNISVTAHGINLIDKFPSKFCSSYIPFHYGGNSIKTPDDPGAMMITFALKPREEYQPSGHINVSRAREFYISWDTDYVGSITTADLVVSASAINFLLLQNGSAVLRYST.

This sequence belongs to the NCLDV major capsid protein family. As to quaternary structure, homotrimer. The membrane-bound form, but not the cytosolic one, assembles into large complexes. Interacts with the minor capsid proteins M1249L and p17; these interactions form a rigid zipper structure that stabilizes the capsomers.

It is found in the virion. Its subcellular location is the host endoplasmic reticulum membrane. The protein localises to the host cytoplasm. The protein resides in the host cytosol. Capsid protein that self-assembles to form the pseudo-hexameric capsomers of the icosahedral capsid. The capsid is constructed of 2760 pseudo-hexameric capsomers and 12 pentameric capsomers, with a T=277 symmetry, about 200 nm in diameter. The capsid encapsulates the DNA-containing nucleoid, the core shell and the inner membrane. Plays an essential role in virion assembly. Involved in virus attachment to the host cell. The polypeptide is Hexon protein p72 (Ornithodoros (relapsing fever ticks)).